Reading from the N-terminus, the 309-residue chain is Ornithine carbamoyltransferase (309 aa).

Residues 51 to 54, glutamine 78, arginine 102, and 129 to 132 each bind carbamoyl phosphate; these read STRT and HPCQ. L-ornithine contacts are provided by residues asparagine 161, aspartate 225, and 229-230; that span reads SM. Carbamoyl phosphate contacts are provided by residues 265 to 266 and arginine 293; that span reads CL.

This sequence belongs to the aspartate/ornithine carbamoyltransferase superfamily. OTCase family.

Its subcellular location is the cytoplasm. It carries out the reaction carbamoyl phosphate + L-ornithine = L-citrulline + phosphate + H(+). It functions in the pathway amino-acid biosynthesis; L-arginine biosynthesis; L-arginine from L-ornithine and carbamoyl phosphate: step 1/3. Its function is as follows. Reversibly catalyzes the transfer of the carbamoyl group from carbamoyl phosphate (CP) to the N(epsilon) atom of ornithine (ORN) to produce L-citrulline. The sequence is that of Ornithine carbamoyltransferase from Mycolicibacterium paratuberculosis (strain ATCC BAA-968 / K-10) (Mycobacterium paratuberculosis).